The chain runs to 116 residues: Ferredoxin-like protein in nif region (116 aa).

One can recognise a 4Fe-4S ferredoxin-type domain in the interval 2–29 (AYTITSQCISCKLCSSVCPTGAIKVAED). Positions 9, 12, 15, and 19 each coordinate iron-sulfur cluster.

The chain is Ferredoxin-like protein in nif region (fdxN) from Trichormus azollae (Anabaena azollae).